We begin with the raw amino-acid sequence, 347 residues long: NADH-ubiquinone oxidoreductase chain 2 (347 aa).

11 helical membrane-spanning segments follow: residues 1-21 (MNPI…MIVM), 25-45 (HWLM…PILM), 60-80 (FLTQ…NLMF), 89-109 (IFNP…LGLS), 111-131 (FHFW…LILL), 149-169 (INLD…GWGG), 178-198 (IMAY…TYNP), 201-221 (TALN…LFML), 242-262 (SLIL…GFIP), 274-294 (DSII…YFYM), and 323-343 (MNFL…TPIM).

The protein belongs to the complex I subunit 2 family. Core subunit of respiratory chain NADH dehydrogenase (Complex I) which is composed of 45 different subunits. Interacts with TMEM242.

The protein localises to the mitochondrion inner membrane. The catalysed reaction is a ubiquinone + NADH + 5 H(+)(in) = a ubiquinol + NAD(+) + 4 H(+)(out). Functionally, core subunit of the mitochondrial membrane respiratory chain NADH dehydrogenase (Complex I) which catalyzes electron transfer from NADH through the respiratory chain, using ubiquinone as an electron acceptor. Essential for the catalytic activity and assembly of complex I. This Ceratotherium simum (White rhinoceros) protein is NADH-ubiquinone oxidoreductase chain 2.